The chain runs to 192 residues: Fe/S biogenesis protein NfuA (192 aa).

[4Fe-4S] cluster contacts are provided by Cys149 and Cys152.

The protein belongs to the NfuA family. As to quaternary structure, homodimer. [4Fe-4S] cluster is required as a cofactor.

In terms of biological role, involved in iron-sulfur cluster biogenesis. Binds a 4Fe-4S cluster, can transfer this cluster to apoproteins, and thereby intervenes in the maturation of Fe/S proteins. Could also act as a scaffold/chaperone for damaged Fe/S proteins. This Proteus mirabilis (strain HI4320) protein is Fe/S biogenesis protein NfuA.